A 183-amino-acid polypeptide reads, in one-letter code: Outer membrane protein H.8 (183 aa).

Positions 1–17 (MKAYLALISAAVIGLAA) are cleaved as a signal peptide. Cysteine 18 is lipidated: N-palmitoyl cysteine. Cysteine 18 carries S-diacylglycerol cysteine lipidation. The segment at 27 to 51 (AEATPAAEAPASEAPAAEAAPADAA) is disordered. The region spanning 57 to 183 (GNCAATVESN…LMNGKVTLVD (127 aa)) is the Plastocyanin-like domain. Cu cation-binding residues include histidine 102, cysteine 166, histidine 171, and methionine 175.

Cu cation is required as a cofactor.

It is found in the cell outer membrane. This chain is Outer membrane protein H.8, found in Neisseria meningitidis serogroup C / serotype 2a (strain ATCC 700532 / DSM 15464 / FAM18).